Reading from the N-terminus, the 393-residue chain is NAD(P)H-quinone oxidoreductase subunit H, chloroplastic (393 aa).

Belongs to the complex I 49 kDa subunit family. In terms of assembly, NDH is composed of at least 16 different subunits, 5 of which are encoded in the nucleus.

The protein resides in the plastid. The protein localises to the chloroplast thylakoid membrane. It catalyses the reaction a plastoquinone + NADH + (n+1) H(+)(in) = a plastoquinol + NAD(+) + n H(+)(out). It carries out the reaction a plastoquinone + NADPH + (n+1) H(+)(in) = a plastoquinol + NADP(+) + n H(+)(out). In terms of biological role, NDH shuttles electrons from NAD(P)H:plastoquinone, via FMN and iron-sulfur (Fe-S) centers, to quinones in the photosynthetic chain and possibly in a chloroplast respiratory chain. The immediate electron acceptor for the enzyme in this species is believed to be plastoquinone. Couples the redox reaction to proton translocation, and thus conserves the redox energy in a proton gradient. The chain is NAD(P)H-quinone oxidoreductase subunit H, chloroplastic from Pelargonium hortorum (Common geranium).